A 105-amino-acid chain; its full sequence is Small ribosomal subunit protein uS10 (105 aa).

The protein belongs to the universal ribosomal protein uS10 family. As to quaternary structure, part of the 30S ribosomal subunit.

Involved in the binding of tRNA to the ribosomes. The chain is Small ribosomal subunit protein uS10 from Nostoc punctiforme (strain ATCC 29133 / PCC 73102).